The primary structure comprises 258 residues: Phosphate import ATP-binding protein PstB (258 aa).

The 243-residue stretch at 5–247 (LDLKGVNIYY…EKIFSNPSQK (243 aa)) folds into the ABC transporter domain. 37–44 (GPSGCGKT) serves as a coordination point for ATP.

Belongs to the ABC transporter superfamily. Phosphate importer (TC 3.A.1.7) family. The complex is composed of two ATP-binding proteins (PstB), two transmembrane proteins (PstC and PstA) and a solute-binding protein (PstS).

It localises to the cell membrane. It carries out the reaction phosphate(out) + ATP + H2O = ADP + 2 phosphate(in) + H(+). Functionally, part of the ABC transporter complex PstSACB involved in phosphate import. Responsible for energy coupling to the transport system. In Mycolicibacterium paratuberculosis (strain ATCC BAA-968 / K-10) (Mycobacterium paratuberculosis), this protein is Phosphate import ATP-binding protein PstB.